The following is a 297-amino-acid chain: D-aminoacyl-tRNA deacylase (297 aa).

This sequence belongs to the DtdA deacylase family. Monomer. It depends on Zn(2+) as a cofactor.

The catalysed reaction is a D-aminoacyl-tRNA + H2O = a tRNA + a D-alpha-amino acid + H(+). It carries out the reaction glycyl-tRNA(Ala) + H2O = tRNA(Ala) + glycine + H(+). Functionally, D-aminoacyl-tRNA deacylase with broad substrate specificity. By recycling D-aminoacyl-tRNA to D-amino acids and free tRNA molecules, this enzyme counteracts the toxicity associated with the formation of D-aminoacyl-tRNA entities in vivo. The protein is D-aminoacyl-tRNA deacylase of Methanosarcina mazei (strain ATCC BAA-159 / DSM 3647 / Goe1 / Go1 / JCM 11833 / OCM 88) (Methanosarcina frisia).